The chain runs to 831 residues: Replication restart protein PriA (831 aa).

Residues 304 to 471 enclose the Helicase ATP-binding domain; sequence VLPLQGYHQV…HRHQNDPQRH (168 aa). 317–324 is a binding site for ATP; it reads GVTGSGKT. Residues 413–416 carry the DEAH box motif; it reads DEEH. Zn(2+) contacts are provided by C537, C540, C546, C549, C568, C571, C581, and C584. Positions 575–735 constitute a Helicase C-terminal domain; the sequence is EIQPKVCPEC…ELPQREMLNY (161 aa).

It belongs to the helicase family. PriA subfamily. In terms of assembly, component of the replication restart primosome. It depends on Zn(2+) as a cofactor.

It carries out the reaction Couples ATP hydrolysis with the unwinding of duplex DNA by translocating in the 3'-5' direction.. It catalyses the reaction ATP + H2O = ADP + phosphate + H(+). Functionally, initiates the restart of stalled replication forks, which reloads the replicative helicase on sites other than the origin of replication. Recognizes and binds to abandoned replication forks and remodels them to uncover a helicase loading site. Promotes assembly of the primosome at these replication forks. In Synechocystis sp. (strain ATCC 27184 / PCC 6803 / Kazusa), this protein is Replication restart protein PriA.